A 558-amino-acid chain; its full sequence is Serine/threonine-protein phosphatase 2B catalytic subunit (558 aa).

Residues aspartate 128, histidine 130, and aspartate 156 each coordinate Fe cation. The Zn(2+) site is built by aspartate 156 and asparagine 188. Histidine 189 serves as the catalytic Proton donor. Residues histidine 237 and histidine 319 each contribute to the Zn(2+) site. Disordered stretches follow at residues leucine 415–proline 439 and alanine 534–serine 558. Residues alanine 420–alanine 435 show a composition bias toward low complexity. Residues alanine 534–leucine 548 are compositionally biased toward basic and acidic residues. Polar residues predominate over residues glutamine 549–serine 558.

It belongs to the PPP phosphatase family. PP-2B subfamily. Composed of two components (A and B), the A component is the catalytic subunit and the B component confers calcium sensitivity. The cofactor is Fe(3+). It depends on Zn(2+) as a cofactor.

It carries out the reaction O-phospho-L-seryl-[protein] + H2O = L-seryl-[protein] + phosphate. The catalysed reaction is O-phospho-L-threonyl-[protein] + H2O = L-threonyl-[protein] + phosphate. In terms of biological role, calcium-dependent, calmodulin-stimulated protein phosphatase. This subunit may have a role in the calmodulin activation of calcineurin. The protein is Serine/threonine-protein phosphatase 2B catalytic subunit (cna-1) of Neurospora crassa (strain ATCC 24698 / 74-OR23-1A / CBS 708.71 / DSM 1257 / FGSC 987).